Here is a 517-residue protein sequence, read N- to C-terminus: Argininosuccinate lyase, chloroplastic (517 aa).

The transit peptide at 1–45 (MGAIDLSFSQSLLFSSSRSNLSSSTHRSVSFLPPGSKSRCLPPLR) directs the protein to the chloroplast. Residues S79, N166, and T211 each contribute to the 2-(N(omega)-L-arginino)succinate site. The active-site Proton acceptor is H212. S333 (proton donor) is an active-site residue. Positions 341, 373, 378, and 381 each coordinate 2-(N(omega)-L-arginino)succinate.

The protein belongs to the lyase 1 family. Argininosuccinate lyase subfamily.

The protein localises to the plastid. It localises to the chloroplast. The enzyme catalyses 2-(N(omega)-L-arginino)succinate = fumarate + L-arginine. The protein operates within amino-acid biosynthesis; L-arginine biosynthesis; L-arginine from L-ornithine and carbamoyl phosphate: step 3/3. The polypeptide is Argininosuccinate lyase, chloroplastic (Arabidopsis thaliana (Mouse-ear cress)).